The following is an 89-amino-acid chain: Small ribosomal subunit protein uS14A (89 aa).

It belongs to the universal ribosomal protein uS14 family. In terms of assembly, part of the 30S ribosomal subunit. Contacts proteins S3 and S10.

In terms of biological role, binds 16S rRNA, required for the assembly of 30S particles and may also be responsible for determining the conformation of the 16S rRNA at the A site. This chain is Small ribosomal subunit protein uS14A, found in Lacticaseibacillus paracasei (strain ATCC 334 / BCRC 17002 / CCUG 31169 / CIP 107868 / KCTC 3260 / NRRL B-441) (Lactobacillus paracasei).